A 342-amino-acid polypeptide reads, in one-letter code: Succinylglutamate desuccinylase (342 aa).

Positions 63, 66, and 155 each coordinate Zn(2+). The active site involves Glu-219.

Belongs to the AspA/AstE family. Succinylglutamate desuccinylase subfamily. Zn(2+) is required as a cofactor.

It catalyses the reaction N-succinyl-L-glutamate + H2O = L-glutamate + succinate. It participates in amino-acid degradation; L-arginine degradation via AST pathway; L-glutamate and succinate from L-arginine: step 5/5. In terms of biological role, transforms N(2)-succinylglutamate into succinate and glutamate. This chain is Succinylglutamate desuccinylase, found in Vibrio cholerae serotype O1 (strain ATCC 39315 / El Tor Inaba N16961).